Reading from the N-terminus, the 317-residue chain is Probable cell division protein WhiA (317 aa).

Positions 278–311 (SLQGLGELLDPQVGKSGVNHRLRKIGEKADELRQ) form a DNA-binding region, H-T-H motif.

This sequence belongs to the WhiA family.

Functionally, involved in cell division and chromosome segregation. The protein is Probable cell division protein WhiA of Lachnospira eligens (strain ATCC 27750 / DSM 3376 / VPI C15-48 / C15-B4) (Eubacterium eligens).